The sequence spans 202 residues: Small ribosomal subunit protein uS4 (202 aa).

The disordered stretch occupies residues 18–44; sequence LPGLTRKSARREYPPGQHGQGRRKRSE. The S4 RNA-binding domain maps to 90-152; that stretch reads MRLDNTVFRL…DRSRKLIEAN (63 aa).

This sequence belongs to the universal ribosomal protein uS4 family. In terms of assembly, part of the 30S ribosomal subunit. Contacts protein S5. The interaction surface between S4 and S5 is involved in control of translational fidelity.

One of the primary rRNA binding proteins, it binds directly to 16S rRNA where it nucleates assembly of the body of the 30S subunit. In terms of biological role, with S5 and S12 plays an important role in translational accuracy. This is Small ribosomal subunit protein uS4 from Picosynechococcus sp. (strain ATCC 27264 / PCC 7002 / PR-6) (Agmenellum quadruplicatum).